Reading from the N-terminus, the 127-residue chain is MAKLSQDDLLAQFEEMTLIELSEFVKAFEEKFDVTAAAAVAVAGPAGVGAAPEAAEEQDEFDVILTGAGDKKIQVIKVVRELTSLGLKEAKDLVDGAPKPVLEKVAKEAADKAAESLKAAGAAVEVK.

This sequence belongs to the bacterial ribosomal protein bL12 family. In terms of assembly, homodimer. Part of the ribosomal stalk of the 50S ribosomal subunit. Forms a multimeric L10(L12)X complex, where L10 forms an elongated spine to which 2 to 4 L12 dimers bind in a sequential fashion. Binds GTP-bound translation factors.

Forms part of the ribosomal stalk which helps the ribosome interact with GTP-bound translation factors. Is thus essential for accurate translation. This chain is Large ribosomal subunit protein bL12, found in Streptomyces virginiae (Streptomyces cinnamonensis).